The following is a 484-amino-acid chain: Diaminopimelate decarboxylase 1, chloroplastic (484 aa).

Residues 1–28 are compositionally biased toward polar residues; it reads MAAATQFLSQPSSLNPHQLKNQTSQRSR. Residues 1–30 are disordered; the sequence is MAAATQFLSQPSSLNPHQLKNQTSQRSRSI. Residues 1–49 constitute a chloroplast transit peptide; sequence MAAATQFLSQPSSLNPHQLKNQTSQRSRSIPVLSLKSTLKPLKRLSVKA. N-acetylalanine is present on Ala50. Position 125 is an N6-(pyridoxal phosphate)lysine (Lys125). Pyridoxal 5'-phosphate is bound by residues Gly304 and 340 to 343; that span reads EPGR. 3 residues coordinate substrate: Arg343, Arg379, and Tyr383. Cys411 (proton donor) is an active-site residue. Residues Glu412 and Tyr440 each coordinate substrate. Tyr440 lines the pyridoxal 5'-phosphate pocket.

The protein belongs to the Orn/Lys/Arg decarboxylase class-II family. LysA subfamily. As to quaternary structure, homodimer. The cofactor is pyridoxal 5'-phosphate.

Its subcellular location is the plastid. It is found in the chloroplast. It carries out the reaction meso-2,6-diaminopimelate + H(+) = L-lysine + CO2. It functions in the pathway amino-acid biosynthesis; L-lysine biosynthesis via DAP pathway; L-lysine from DL-2,6-diaminopimelate: step 1/1. In terms of biological role, specifically catalyzes the decarboxylation of meso-diaminopimelate (meso-DAP) to L-lysine. This chain is Diaminopimelate decarboxylase 1, chloroplastic (LYSA1), found in Arabidopsis thaliana (Mouse-ear cress).